The chain runs to 69 residues: DNA-directed RNA polymerase subunit epsilon (69 aa).

It belongs to the RNA polymerase subunit epsilon family. As to quaternary structure, RNAP is composed of a core of 2 alpha, a beta and a beta' subunit. The core is associated with a delta subunit, and at least one of epsilon or omega. When a sigma factor is associated with the core the holoenzyme is formed, which can initiate transcription.

The enzyme catalyses RNA(n) + a ribonucleoside 5'-triphosphate = RNA(n+1) + diphosphate. A non-essential component of RNA polymerase (RNAP). This is DNA-directed RNA polymerase subunit epsilon from Listeria monocytogenes serotype 4b (strain CLIP80459).